The primary structure comprises 510 residues: 2,3-bisphosphoglycerate-independent phosphoglycerate mutase (510 aa).

Residues aspartate 13 and serine 63 each coordinate Mn(2+). Residue serine 63 is the Phosphoserine intermediate of the active site. Substrate-binding positions include histidine 124, 154 to 155 (RD), arginine 186, arginine 192, 262 to 265 (RADR), and lysine 334. Mn(2+) contacts are provided by aspartate 401, histidine 405, aspartate 442, histidine 443, and histidine 461.

This sequence belongs to the BPG-independent phosphoglycerate mutase family. As to quaternary structure, monomer. It depends on Mn(2+) as a cofactor.

It catalyses the reaction (2R)-2-phosphoglycerate = (2R)-3-phosphoglycerate. Its pathway is carbohydrate degradation; glycolysis; pyruvate from D-glyceraldehyde 3-phosphate: step 3/5. Catalyzes the interconversion of 2-phosphoglycerate and 3-phosphoglycerate. The protein is 2,3-bisphosphoglycerate-independent phosphoglycerate mutase of Aliivibrio fischeri (strain MJ11) (Vibrio fischeri).